The chain runs to 700 residues: Methionine--tRNA ligase (700 aa).

The 'HIGH' region signature appears at 14–24; it reads PYANGPVHLGH. Positions 146, 149, 159, and 162 each coordinate Zn(2+). Residues 344-348 carry the 'KMSKS' region motif; it reads KFSKS. Lysine 347 is an ATP binding site. Residues 599–700 enclose the tRNA-binding domain; the sequence is DFLKVDLRVA…GEEINGRQIQ (102 aa).

It belongs to the class-I aminoacyl-tRNA synthetase family. MetG type 1 subfamily. Homodimer. The cofactor is Zn(2+).

It localises to the cytoplasm. It catalyses the reaction tRNA(Met) + L-methionine + ATP = L-methionyl-tRNA(Met) + AMP + diphosphate. Its function is as follows. Is required not only for elongation of protein synthesis but also for the initiation of all mRNA translation through initiator tRNA(fMet) aminoacylation. This Pelodictyon phaeoclathratiforme (strain DSM 5477 / BU-1) protein is Methionine--tRNA ligase.